Reading from the N-terminus, the 428-residue chain is Chaperone SurA (428 aa).

A signal peptide spans 1–13; sequence MLGALLLSGAVHA. 2 PpiC domains span residues 164-265 and 276-375; these read SEEF…KLLE and RDEV…EVLG.

The protein resides in the periplasm. It catalyses the reaction [protein]-peptidylproline (omega=180) = [protein]-peptidylproline (omega=0). Its function is as follows. Chaperone involved in the correct folding and assembly of outer membrane proteins. Recognizes specific patterns of aromatic residues and the orientation of their side chains, which are found more frequently in integral outer membrane proteins. May act in both early periplasmic and late outer membrane-associated steps of protein maturation. This is Chaperone SurA from Pseudomonas syringae pv. tomato (strain ATCC BAA-871 / DC3000).